The chain runs to 394 residues: Elongation factor Tu (394 aa).

One can recognise a tr-type G domain in the interval 10–204 (KPHVNVGTIG…ALDSYIPEPQ (195 aa)). Positions 19–26 (GHVDHGKT) are G1. 19 to 26 (GHVDHGKT) lines the GTP pocket. Mg(2+) is bound at residue Thr-26. Residues 60–64 (GITIN) form a G2 region. Residues 81–84 (DCPG) form a G3 region. GTP-binding positions include 81 to 85 (DCPGH) and 136 to 139 (NKCD). Residues 136–139 (NKCD) form a G4 region. The segment at 174 to 176 (SAL) is G5.

The protein belongs to the TRAFAC class translation factor GTPase superfamily. Classic translation factor GTPase family. EF-Tu/EF-1A subfamily. In terms of assembly, monomer.

The protein resides in the cytoplasm. It catalyses the reaction GTP + H2O = GDP + phosphate + H(+). Functionally, GTP hydrolase that promotes the GTP-dependent binding of aminoacyl-tRNA to the A-site of ribosomes during protein biosynthesis. This Shewanella baltica (strain OS185) protein is Elongation factor Tu.